The sequence spans 306 residues: Ribonuclease Z (306 aa).

H63, H65, D67, H68, H141, D208, and H266 together coordinate Zn(2+). The Proton acceptor role is filled by D67.

Belongs to the RNase Z family. In terms of assembly, homodimer. Zn(2+) is required as a cofactor.

The catalysed reaction is Endonucleolytic cleavage of RNA, removing extra 3' nucleotides from tRNA precursor, generating 3' termini of tRNAs. A 3'-hydroxy group is left at the tRNA terminus and a 5'-phosphoryl group is left at the trailer molecule.. Its function is as follows. Zinc phosphodiesterase, which displays some tRNA 3'-processing endonuclease activity. Probably involved in tRNA maturation, by removing a 3'-trailer from precursor tRNA. The protein is Ribonuclease Z of Chlamydia caviae (strain ATCC VR-813 / DSM 19441 / 03DC25 / GPIC) (Chlamydophila caviae).